The chain runs to 1373 residues: DNA-directed RNA polymerase subunit beta (1373 aa).

This sequence belongs to the RNA polymerase beta chain family. The RNAP catalytic core consists of 2 alpha, 1 beta, 1 beta' and 1 omega subunit. When a sigma factor is associated with the core the holoenzyme is formed, which can initiate transcription.

The enzyme catalyses RNA(n) + a ribonucleoside 5'-triphosphate = RNA(n+1) + diphosphate. In terms of biological role, DNA-dependent RNA polymerase catalyzes the transcription of DNA into RNA using the four ribonucleoside triphosphates as substrates. The protein is DNA-directed RNA polymerase subunit beta of Rickettsia akari (strain Hartford).